The primary structure comprises 107 residues: Parvalbumin beta (107 aa).

Position 1 is an N-acetylserine (S1). 2 EF-hand domains span residues 37–72 (KSLDDVKKAFYVIDQDKSGFIEEDELKLFLQNFSPS) and 76–107 (LTDAETKAFLADGDKDGDGMIGVDEFAAMIKA). Residues D50, D52, S54, F56, E58, E61, D89, D91, D93, M95, and E100 each contribute to the Ca(2+) site.

Belongs to the parvalbumin family.

Its function is as follows. In muscle, parvalbumin is thought to be involved in relaxation after contraction. It binds two calcium ions. The chain is Parvalbumin beta from Esox lucius (Northern pike).